The chain runs to 376 residues: ATP synthase gamma chain, chloroplastic (376 aa).

The transit peptide at 1–52 (MSCSNVTMLVSSKPSLPDASNLSFRSAFNPFQLPSQNSSSSCTPSRPTSIQC) directs the protein to the chloroplast. C133 is an active-site residue. C250 and C256 are disulfide-bonded.

This sequence belongs to the ATPase gamma chain family. F-type ATPases have 2 components, CF(1) - the catalytic core - and CF(0) - the membrane proton channel. CF(1) has five subunits: alpha(3), beta(3), gamma(1), delta(1), epsilon(1). CF(0) has four main subunits: a, b, b' and c.

The protein resides in the plastid. The protein localises to the chloroplast thylakoid membrane. Functionally, produces ATP from ADP in the presence of a proton gradient across the membrane. The gamma chain is believed to be important in regulating ATPase activity and the flow of protons through the CF(0) complex. This chain is ATP synthase gamma chain, chloroplastic (ATPC), found in Pisum sativum (Garden pea).